The sequence spans 401 residues: UDP-N-acetylglucosamine--N-acetylmuramyl-(pentapeptide) pyrophosphoryl-undecaprenol N-acetylglucosamine transferase (401 aa).

The segment at 1–24 (MTRISVPAGQERNDGGISVPAGQE) is disordered. Residues 39–41 (TAG), Asn157, Arg194, Ser228, and Gln324 each bind UDP-N-acetyl-alpha-D-glucosamine.

Belongs to the glycosyltransferase 28 family. MurG subfamily.

It localises to the cell membrane. It catalyses the reaction di-trans,octa-cis-undecaprenyl diphospho-N-acetyl-alpha-D-muramoyl-L-alanyl-D-glutamyl-meso-2,6-diaminopimeloyl-D-alanyl-D-alanine + UDP-N-acetyl-alpha-D-glucosamine = di-trans,octa-cis-undecaprenyl diphospho-[N-acetyl-alpha-D-glucosaminyl-(1-&gt;4)]-N-acetyl-alpha-D-muramoyl-L-alanyl-D-glutamyl-meso-2,6-diaminopimeloyl-D-alanyl-D-alanine + UDP + H(+). It functions in the pathway cell wall biogenesis; peptidoglycan biosynthesis. In terms of biological role, cell wall formation. Catalyzes the transfer of a GlcNAc subunit on undecaprenyl-pyrophosphoryl-MurNAc-pentapeptide (lipid intermediate I) to form undecaprenyl-pyrophosphoryl-MurNAc-(pentapeptide)GlcNAc (lipid intermediate II). The protein is UDP-N-acetylglucosamine--N-acetylmuramyl-(pentapeptide) pyrophosphoryl-undecaprenol N-acetylglucosamine transferase of Mycolicibacterium vanbaalenii (strain DSM 7251 / JCM 13017 / BCRC 16820 / KCTC 9966 / NRRL B-24157 / PYR-1) (Mycobacterium vanbaalenii).